Consider the following 183-residue polypeptide: Nodulation protein L (183 aa).

It belongs to the transferase hexapeptide repeat family.

Acetyltransferase implicated in the O-acetylation of Nod factors. This Rhizobium meliloti (strain 1021) (Ensifer meliloti) protein is Nodulation protein L (nodL).